The sequence spans 293 residues: Putative ribose uptake protein RbsU (293 aa).

The next 10 helical transmembrane spans lie at 5 to 24 (AILI…TIAS), 34 to 51 (IFGA…LALF), 58 to 80 (GGMA…IITF), 95 to 114 (TTAF…LGNW), 121 to 138 (IIGF…RMTV), 153 to 170 (SAVI…IYSA), 177 to 199 (IGGF…IYAL), 212 to 234 (VSWQ…LISA), 241 to 263 (LATG…IFFL), and 273 to 292 (MITI…TVFI).

The protein belongs to the GRP transporter (TC 2.A.7.5) family.

The protein resides in the cell membrane. Its function is as follows. Could be involved in the uptake of ribose. In Staphylococcus epidermidis (strain ATCC 35984 / DSM 28319 / BCRC 17069 / CCUG 31568 / BM 3577 / RP62A), this protein is Putative ribose uptake protein RbsU (rbsU).